The chain runs to 151 residues: MKLILTADVDNLGAPGDTVEVKDGYGRNYLLPRGLAIVATRGAEKQVEGIRRAQEARAVRGLDHAKELKDAIEGLENISLSVKTAGDSGKLFGSVTAADVAGAIKAAGGPVVDKRNLELPKAHIKATGKHAIVVNLHPDVVAKFHLNVVGA.

This sequence belongs to the bacterial ribosomal protein bL9 family.

Functionally, binds to the 23S rRNA. The sequence is that of Large ribosomal subunit protein bL9 from Rhodococcus jostii (strain RHA1).